The primary structure comprises 349 residues: N-lysine methyltransferase KMT5A (349 aa).

Residues 18–46 form a disordered region; the sequence is AAVAATAPGPEMVEQRGPGRPRSDGENVF. A Phosphoserine modification is found at Ser57. The interval 65-207 is disordered; it reads RSPLQEENSV…SEERKKNELI (143 aa). Residues 107-119 are compositionally biased toward basic and acidic residues; the sequence is VKSDEQKSKDTRR. At Thr138 the chain carries Phosphothreonine. The span at 154–170 shows a compositional bias: basic residues; sequence ALKKSLKGKQAPRKKSQ. Basic and acidic residues predominate over residues 192–207; sequence SKAELQSEERKKNELI. The SET domain maps to 213–334; it reads EGMKIDLIDG…AGEELLYDYG (122 aa). S-adenosyl-L-methionine-binding positions include 223 to 225, Tyr268, and 295 to 296; these read KGR and NH.

Belongs to the class V-like SAM-binding methyltransferase superfamily. Histone-lysine methyltransferase family. PR/SET subfamily. As to quaternary structure, interacts with L3MBTL1. Interacts with SIRT2 (phosphorylated form); the interaction is direct, stimulates KMT5A-mediated methyltransferase activity at histone H4 'Lys-20' (H4K20me1) and is increased in a H(2)O(2)-induced oxidative stress-dependent manner. Post-translationally, ubiquitinated and degraded by the DCX(DTL) complex.

It localises to the nucleus. Its subcellular location is the chromosome. It carries out the reaction L-lysyl(20)-[histone H4] + S-adenosyl-L-methionine = N(6)-methyl-L-lysyl(20)-[histone H4] + S-adenosyl-L-homocysteine + H(+). It catalyses the reaction L-lysyl-[protein] + S-adenosyl-L-methionine = N(6)-methyl-L-lysyl-[protein] + S-adenosyl-L-homocysteine + H(+). Functionally, protein-lysine N-methyltransferase that monomethylates both histones and non-histone proteins. Specifically monomethylates 'Lys-20' of histone H4 (H4K20me1). H4K20me1 is enriched during mitosis and represents a specific tag for epigenetic transcriptional repression. Mainly functions in euchromatin regions, thereby playing a central role in the silencing of euchromatic genes. Required for cell proliferation, probably by contributing to the maintenance of proper higher-order structure of DNA during mitosis. Involved in chromosome condensation and proper cytokinesis. Nucleosomes are preferred as substrate compared to free histones. Mediates monomethylation of p53/TP53 at 'Lys-382', leading to repress p53/TP53-target genes. Plays a negative role in TGF-beta response regulation and a positive role in cell migration. The chain is N-lysine methyltransferase KMT5A from Mus musculus (Mouse).